The sequence spans 188 residues: dCTP deaminase (188 aa).

DCTP-binding positions include 111–116, 135–137, Gln156, Tyr170, and Gln180; these read KSTYAR and TLE. The active-site Proton donor/acceptor is Glu137.

This sequence belongs to the dCTP deaminase family. Homotrimer.

The enzyme catalyses dCTP + H2O + H(+) = dUTP + NH4(+). It functions in the pathway pyrimidine metabolism; dUMP biosynthesis; dUMP from dCTP (dUTP route): step 1/2. In terms of biological role, catalyzes the deamination of dCTP to dUTP. The chain is dCTP deaminase from Neisseria meningitidis serogroup B (strain ATCC BAA-335 / MC58).